The sequence spans 350 residues: WD repeat-containing protein DWA2 (350 aa).

WD repeat units lie at residues 39–79 (KEEN…FDQR), 118–158 (AHVG…KSAE), 166–205 (GMRHSLSGGAWNPHDVNSVAATSESSIQFWDLRTMKKNNS), 206–246 (IERA…FPVQ), 250–290 (GHTH…EHKT), and 311–350 (DYEDSVYGLAWSSREPWIFASLSYDGRVVIESVKPFLPRR).

Interacts with ABI5 and DDB1A and DWA1.

The protein localises to the nucleus. The protein operates within protein modification; protein ubiquitination. Its function is as follows. Component of the CUL4-RBX1-DDB1-DWA1/DWA2 E3 ubiquitin-protein ligase complex that acts as a negative regulator in abscisic acid (ABA) signaling. May function as the substrate recognition module within this complex leading to ABI5 degradation. Functionally redundant with DWA1. This Arabidopsis thaliana (Mouse-ear cress) protein is WD repeat-containing protein DWA2 (DWA2).